The sequence spans 298 residues: UDP-N-acetylenolpyruvoylglucosamine reductase (298 aa).

Residues 26–190 form the FAD-binding PCMH-type domain; that stretch reads RAGGPAERLY…VAAVLDLEPG (165 aa). Arg170 is an active-site residue. Ser219 serves as the catalytic Proton donor. Glu289 is a catalytic residue.

The protein belongs to the MurB family. It depends on FAD as a cofactor.

It is found in the cytoplasm. It catalyses the reaction UDP-N-acetyl-alpha-D-muramate + NADP(+) = UDP-N-acetyl-3-O-(1-carboxyvinyl)-alpha-D-glucosamine + NADPH + H(+). The protein operates within cell wall biogenesis; peptidoglycan biosynthesis. Its function is as follows. Cell wall formation. In Alkalilimnicola ehrlichii (strain ATCC BAA-1101 / DSM 17681 / MLHE-1), this protein is UDP-N-acetylenolpyruvoylglucosamine reductase.